Reading from the N-terminus, the 695-residue chain is Centrosomal protein of 89 kDa (695 aa).

Disordered stretches follow at residues 24–54, 66–147, and 167–272; these read LIPA…RPRS, TGRT…GDED, and AVPL…SEVL. Over residues 34–49 the composition is skewed to pro residues; sequence PAVPRTPPPRSPNPSP. Acidic residues-rich tracts occupy residues 124–146 and 178–189; these read DEDD…EGDE and DSDVDEETEDSA. Polar residues predominate over residues 209 to 226; the sequence is GQTQPSSLPQPRSVSRRS. The segment covering 251-271 has biased composition (basic and acidic residues); the sequence is TNKESPVRVNERDRSSEDSEV. Coiled-coil stretches lie at residues 276-368 and 406-632; these read LEVQ…RYQA and AYED…LEKE.

The protein localises to the cytoplasm. The protein resides in the cytosol. It localises to the cytoskeleton. It is found in the microtubule organizing center. Its subcellular location is the centrosome. The protein localises to the spindle pole. The protein resides in the centriole. It localises to the mitochondrion intermembrane space. Functionally, required for ciliogenesis. Also plays a role in mitochondrial metabolism where it may modulate complex IV activity. This is Centrosomal protein of 89 kDa (cep89) from Danio rerio (Zebrafish).